The chain runs to 231 residues: Protein crossbronx homolog (231 aa).

The UBC core domain maps to 14–168 (LQEYKILTEY…VEECVRLSQA (155 aa)).

It belongs to the ubiquitin-conjugating enzyme family. FTS subfamily.

This is Protein crossbronx homolog from Culex quinquefasciatus (Southern house mosquito).